The primary structure comprises 320 residues: Ferrochelatase (320 aa).

The Fe cation site is built by histidine 194 and glutamate 275.

The protein belongs to the ferrochelatase family. Monomer.

It is found in the cytoplasm. The catalysed reaction is heme b + 2 H(+) = protoporphyrin IX + Fe(2+). The protein operates within porphyrin-containing compound metabolism; protoheme biosynthesis; protoheme from protoporphyrin-IX: step 1/1. In terms of biological role, catalyzes the ferrous insertion into protoporphyrin IX. This Escherichia coli (strain K12 / MC4100 / BW2952) protein is Ferrochelatase.